The chain runs to 208 residues: MTKGILGKKVGMTQIFTESGEFIPVTVIEATPNVVLQVKTVETDGYEAIQVGFDDKREVLSNKPAKGHVAKANTAPKRFIREFKNIEGLEVGAEITVDIFAAGDVVDVTGTSKGKGFQGVIKRHGQSRGPMAHGSRYHRRPGSMGPVAPNRVFKNKHLAGRMGGNRVTIQNLEIVQVIPEKNVILIKGNVPGAKKSLITIKSAVKAAK.

A disordered region spans residues 117–147 (FQGVIKRHGQSRGPMAHGSRYHRRPGSMGPV).

It belongs to the universal ribosomal protein uL3 family. Part of the 50S ribosomal subunit. Forms a cluster with proteins L14 and L19.

Functionally, one of the primary rRNA binding proteins, it binds directly near the 3'-end of the 23S rRNA, where it nucleates assembly of the 50S subunit. This is Large ribosomal subunit protein uL3 from Streptococcus equi subsp. zooepidemicus (strain H70).